The primary structure comprises 2357 residues: Myosin-I heavy chain (2357 aa).

The Myosin motor domain maps to 13 to 688 (QPVEDMITLP…QYLKLEELRK (676 aa)). 106-113 (GESGAGKT) lines the ATP pocket. Residues 579–586 (YVRCIKPN) form an actin-binding region. One can recognise an IQ domain in the interval 691–720 (LLKKVTLIQSVWRMYRCKKRYQQIRASAKI). Residues 787-891 (KRDRNARMLE…QDKNINELDD (105 aa)) are a coiled coil. Residues 787-1076 (KRDRNARMLE…PILGAPPPPP (290 aa)) form a binding to talin A region. Disordered stretches follow at residues 797–852 (IQRE…EEEL) and 974–1112 (ASSF…NPQP). Composition is skewed to low complexity over residues 1003 to 1025 (NNNYINSNNGDLPLPTSQSSDFS) and 1078 to 1106 (TSDSTSPSATATGNNTPNSSSASASQSTN). In terms of domain architecture, MyTH4 1 spans 1155–1313 (YQKSHIKSSL…PSVTELESIK (159 aa)). The FERM 1 domain occupies 1318–1620 (IFVRITATDG…EYSLYLRNNA (303 aa)). Residues 1618–1678 (NNAKYARALK…PVDHVEILLS (61 aa)) enclose the SH3 domain. The disordered stretch occupies residues 1686–1849 (VHPVATLSPP…PSKRLTVSPA (164 aa)). A compositionally biased stretch (pro residues) spans 1706–1733 (TPPPPPSISDSMSPPPQVGMLPPPPPPS). 2 stretches are compositionally biased toward low complexity: residues 1734 to 1746 (VMGSTKPIEIPSL) and 1755 to 1770 (SSNSSVPNSPIGSPMM). Polar residues predominate over residues 1817-1828 (FRSSLRVSMLNT). The MyTH4 2 domain occupies 1894–2051 (FNKDPIKESL…PSATEIQSFR (158 aa)). The region spanning 2060-2357 (STCKIRFIDQ…ASVYQFYSSQ (298 aa)) is the FERM 2 domain.

This sequence belongs to the TRAFAC class myosin-kinesin ATPase superfamily. Myosin family. Monomer. Interacts with talA.

It is found in the cytoplasm. Myosins are actin-based motor molecules with ATPase activity. Involved in the early steps of phagocytosis and adhesion. The chain is Myosin-I heavy chain (myoI) from Dictyostelium discoideum (Social amoeba).